We begin with the raw amino-acid sequence, 308 residues long: tRNA dimethylallyltransferase (308 aa).

10–17 lines the ATP pocket; the sequence is GPTASGKT. 12 to 17 is a binding site for substrate; sequence TASGKT. 2 interaction with substrate tRNA regions span residues 35-38 and 159-163; these read DSSL and QRIFR.

Belongs to the IPP transferase family. Monomer. The cofactor is Mg(2+).

The enzyme catalyses adenosine(37) in tRNA + dimethylallyl diphosphate = N(6)-dimethylallyladenosine(37) in tRNA + diphosphate. Functionally, catalyzes the transfer of a dimethylallyl group onto the adenine at position 37 in tRNAs that read codons beginning with uridine, leading to the formation of N6-(dimethylallyl)adenosine (i(6)A). This is tRNA dimethylallyltransferase from Francisella philomiragia subsp. philomiragia (strain ATCC 25017 / CCUG 19701 / FSC 153 / O#319-036).